We begin with the raw amino-acid sequence, 359 residues long: Phosphate acyltransferase (359 aa).

The tract at residues 338 to 359 (AGGVQSAPETEAPGAHPSPHVA) is disordered.

The protein belongs to the PlsX family. In terms of assembly, homodimer. Probably interacts with PlsY.

The protein resides in the cytoplasm. The catalysed reaction is a fatty acyl-[ACP] + phosphate = an acyl phosphate + holo-[ACP]. It functions in the pathway lipid metabolism; phospholipid metabolism. Functionally, catalyzes the reversible formation of acyl-phosphate (acyl-PO(4)) from acyl-[acyl-carrier-protein] (acyl-ACP). This enzyme utilizes acyl-ACP as fatty acyl donor, but not acyl-CoA. In Cupriavidus taiwanensis (strain DSM 17343 / BCRC 17206 / CCUG 44338 / CIP 107171 / LMG 19424 / R1) (Ralstonia taiwanensis (strain LMG 19424)), this protein is Phosphate acyltransferase.